Consider the following 744-residue polypeptide: Elongation factor G, mitochondrial (744 aa).

The N-terminal 25 residues, 1-25 (MTISCLLRIRPALAKSFFENGQRAF), are a transit peptide targeting the mitochondrion. Residues 38–315 (ERIRNIGISA…AVLDYLPNPG (278 aa)) enclose the tr-type G domain. GTP-binding positions include 47–54 (AHIDSGKT), 114–118 (DTPGH), and 168–171 (NKLD).

It belongs to the TRAFAC class translation factor GTPase superfamily. Classic translation factor GTPase family. EF-G/EF-2 subfamily.

Its subcellular location is the mitochondrion. Its pathway is protein biosynthesis; polypeptide chain elongation. In terms of biological role, mitochondrial GTPase that catalyzes the GTP-dependent ribosomal translocation step during translation elongation. During this step, the ribosome changes from the pre-translocational (PRE) to the post-translocational (POST) state as the newly formed A-site-bound peptidyl-tRNA and P-site-bound deacylated tRNA move to the P and E sites, respectively. Catalyzes the coordinated movement of the two tRNA molecules, the mRNA and conformational changes in the ribosome. The chain is Elongation factor G, mitochondrial from Culex quinquefasciatus (Southern house mosquito).